The following is a 301-amino-acid chain: Tyrosine recombinase XerC (301 aa).

Residues methionine 1–valine 89 enclose the Core-binding (CB) domain. Residues arginine 110–aspartate 290 form the Tyr recombinase domain. Residues arginine 151, lysine 175, histidine 242, arginine 245, and histidine 268 contribute to the active site. Tyrosine 277 (O-(3'-phospho-DNA)-tyrosine intermediate) is an active-site residue.

Belongs to the 'phage' integrase family. XerC subfamily. In terms of assembly, forms a cyclic heterotetrameric complex composed of two molecules of XerC and two molecules of XerD.

It is found in the cytoplasm. Functionally, site-specific tyrosine recombinase, which acts by catalyzing the cutting and rejoining of the recombining DNA molecules. The XerC-XerD complex is essential to convert dimers of the bacterial chromosome into monomers to permit their segregation at cell division. It also contributes to the segregational stability of plasmids. The polypeptide is Tyrosine recombinase XerC (Neisseria meningitidis serogroup B (strain ATCC BAA-335 / MC58)).